A 372-amino-acid polypeptide reads, in one-letter code: Chorismate synthase (372 aa).

Arg48 contacts NADP(+). FMN-binding positions include 131-133 (RSS), 243-244 (NA), Gly288, 303-307 (KPTSS), and Arg329.

The protein belongs to the chorismate synthase family. In terms of assembly, homotetramer. FMNH2 serves as cofactor.

The catalysed reaction is 5-O-(1-carboxyvinyl)-3-phosphoshikimate = chorismate + phosphate. The protein operates within metabolic intermediate biosynthesis; chorismate biosynthesis; chorismate from D-erythrose 4-phosphate and phosphoenolpyruvate: step 7/7. In terms of biological role, catalyzes the anti-1,4-elimination of the C-3 phosphate and the C-6 proR hydrogen from 5-enolpyruvylshikimate-3-phosphate (EPSP) to yield chorismate, which is the branch point compound that serves as the starting substrate for the three terminal pathways of aromatic amino acid biosynthesis. This reaction introduces a second double bond into the aromatic ring system. The sequence is that of Chorismate synthase from Caulobacter vibrioides (strain ATCC 19089 / CIP 103742 / CB 15) (Caulobacter crescentus).